The chain runs to 311 residues: HPr kinase/phosphorylase (311 aa).

Active-site residues include His140 and Lys161. 155 to 162 is a binding site for ATP; it reads GDSGIGKS. Ser162 contacts Mg(2+). Asp179 acts as the Proton acceptor; for phosphorylation activity. Proton donor; for dephosphorylation activity in catalysis. The important for the catalytic mechanism of both phosphorylation and dephosphorylation stretch occupies residues 203–212; the sequence is IEIRGIGIID. Glu204 provides a ligand contact to Mg(2+). Arg245 is a catalytic residue. An important for the catalytic mechanism of dephosphorylation region spans residues 266-271; it reads PVKTGR.

The protein belongs to the HPrK/P family. In terms of assembly, homohexamer. Requires Mg(2+) as cofactor.

It catalyses the reaction [HPr protein]-L-serine + ATP = [HPr protein]-O-phospho-L-serine + ADP + H(+). It carries out the reaction [HPr protein]-O-phospho-L-serine + phosphate + H(+) = [HPr protein]-L-serine + diphosphate. In terms of biological role, catalyzes the ATP- as well as the pyrophosphate-dependent phosphorylation of a specific serine residue in HPr, a phosphocarrier protein of the phosphoenolpyruvate-dependent sugar phosphotransferase system (PTS). HprK/P also catalyzes the pyrophosphate-producing, inorganic phosphate-dependent dephosphorylation (phosphorolysis) of seryl-phosphorylated HPr (P-Ser-HPr). The two antagonistic activities of HprK/P are regulated by several intracellular metabolites, which change their concentration in response to the absence or presence of rapidly metabolisable carbon sources (glucose, fructose, etc.) in the growth medium. Therefore, by controlling the phosphorylation state of HPr, HPrK/P is a sensor enzyme that plays a major role in the regulation of carbon metabolism and sugar transport: it mediates carbon catabolite repression (CCR), and regulates PTS-catalyzed carbohydrate uptake and inducer exclusion. This Enterococcus faecalis (strain ATCC 700802 / V583) protein is HPr kinase/phosphorylase (hprK).